Here is a 212-residue protein sequence, read N- to C-terminus: Agglutinin isolectin 1 (212 aa).

The signal sequence occupies residues 1–26 (MKMMSTRALALGAAAVLAFAAATAQA). Position 27 is a pyrrolidone carboxylic acid (glutamine 27). 4 Chitin-binding type-1 domains span residues 27 to 68 (QRCG…ACWT), 69 to 111 (SKRC…PCRA), 112 to 154 (DIKC…ACST), and 155 to 197 (DKPC…GCDG). 16 disulfide bridges follow: cysteine 29/cysteine 44, cysteine 38/cysteine 50, cysteine 43/cysteine 57, cysteine 61/cysteine 66, cysteine 72/cysteine 87, cysteine 81/cysteine 93, cysteine 86/cysteine 100, cysteine 104/cysteine 109, cysteine 115/cysteine 130, cysteine 124/cysteine 136, cysteine 129/cysteine 143, cysteine 147/cysteine 152, cysteine 158/cysteine 173, cysteine 167/cysteine 179, cysteine 172/cysteine 186, and cysteine 190/cysteine 195. Residue 36–38 (MEC) participates in substrate binding. 88-99 (SQYGYCGFGAEY) provides a ligand contact to substrate. 140 to 141 (SE) lines the substrate pocket. Positions 198-212 (VFAEAITANSTLLQE) are excised as a propeptide.

In terms of assembly, homodimer, u-shaped.

Functionally, N-acetyl-D-glucosamine / N-acetyl-D-neuraminic acid binding lectin. In Triticum aestivum (Wheat), this protein is Agglutinin isolectin 1.